The primary structure comprises 833 residues: Leucine--tRNA ligase (833 aa).

The 'HIGH' region motif lies at 41–52; that stretch reads PYPSGAGLHVGH. The 'KMSKS' region motif lies at 610–614; sequence KMSKS. Position 613 (Lys613) interacts with ATP.

It belongs to the class-I aminoacyl-tRNA synthetase family.

The protein resides in the cytoplasm. It catalyses the reaction tRNA(Leu) + L-leucine + ATP = L-leucyl-tRNA(Leu) + AMP + diphosphate. This chain is Leucine--tRNA ligase, found in Streptococcus pyogenes serotype M2 (strain MGAS10270).